The chain runs to 829 residues: Periplasmic nitrate reductase (829 aa).

The tat-type signal signal peptide spans 1 to 29 (MKMTRRAFVKANAAASAAAVAGVTLPATA). Residues 41-97 (ITWDKAPCRFCGTGCSVLVGTQNGKVVATQGDPEAPVNKGLNCIKGYFLSKIMYGKD) enclose the 4Fe-4S Mo/W bis-MGD-type domain. The [4Fe-4S] cluster site is built by C48, C51, C55, and C83. Mo-bis(molybdopterin guanine dinucleotide) contacts are provided by residues K85, Q152, N177, C181, 214-221 (WGSNMAEM), 245-249 (STYYH), 264-266 (QSD), M374, Q378, N484, 510-511 (SD), K533, D560, and 718-727 (TGRVLEHWHT). F794 contacts substrate. Mo-bis(molybdopterin guanine dinucleotide) is bound by residues N802 and K819.

It belongs to the prokaryotic molybdopterin-containing oxidoreductase family. NasA/NapA/NarB subfamily. Component of the periplasmic nitrate reductase NapAB complex composed of NapA and NapB. Requires [4Fe-4S] cluster as cofactor. Mo-bis(molybdopterin guanine dinucleotide) serves as cofactor. In terms of processing, predicted to be exported by the Tat system. The position of the signal peptide cleavage has not been experimentally proven.

Its subcellular location is the periplasm. The enzyme catalyses 2 Fe(II)-[cytochrome] + nitrate + 2 H(+) = 2 Fe(III)-[cytochrome] + nitrite + H2O. Catalytic subunit of the periplasmic nitrate reductase complex NapAB. Receives electrons from NapB and catalyzes the reduction of nitrate to nitrite. The polypeptide is Periplasmic nitrate reductase (Vibrio atlanticus (strain LGP32) (Vibrio splendidus (strain Mel32))).